We begin with the raw amino-acid sequence, 139 residues long: D-ribose pyranase (139 aa).

H20 functions as the Proton donor in the catalytic mechanism. Residues D28, H106, and 128–130 (YAN) each bind substrate.

Belongs to the RbsD / FucU family. RbsD subfamily. In terms of assembly, homodecamer.

The protein resides in the cytoplasm. The catalysed reaction is beta-D-ribopyranose = beta-D-ribofuranose. The protein operates within carbohydrate metabolism; D-ribose degradation; D-ribose 5-phosphate from beta-D-ribopyranose: step 1/2. Its function is as follows. Catalyzes the interconversion of beta-pyran and beta-furan forms of D-ribose. The polypeptide is D-ribose pyranase (Escherichia coli O139:H28 (strain E24377A / ETEC)).